A 797-amino-acid polypeptide reads, in one-letter code: Sodium/hydrogen exchanger 4 (797 aa).

The Cytoplasmic portion of the chain corresponds to 1 to 13 (MGPAMFMAFRLWN). The name=A/M1 intramembrane region spans 14 to 28 (WLLLLAVLTRSEATS). Residues 29 to 69 (YVNESSNPTAQQAPDARFAASSSDPDEGISVFELDYDYVQI) are Cytoplasmic-facing. The segment at 32–52 (ESSNPTAQQAPDARFAASSSD) is disordered. The segment at residues 70–90 (PYEVTLWILLASLAKIGFHLY) is an intramembrane region (name=B/M2). The Cytoplasmic portion of the chain corresponds to 91–94 (HRLP). The chain crosses the membrane as a helical span at residues 95 to 114 (HLMPESCLLIIVGALVGGII). Topologically, residues 115–127 (FGTHHKSPPVMDS) are extracellular. Residues 128–148 (SIYFLYLLPPIVLESGYFMPT) traverse the membrane as a helical segment. The Cytoplasmic segment spans residues 149–154 (RPFFEN). The helical transmembrane segment at 155–175 (IGSILWWAGLGALINAFGIGL) threads the bilayer. The Extracellular portion of the chain corresponds to 176 to 194 (SLYFICQIKAFGLGDINLL). Residues 195–215 (HNLLFGSLISAVDPVAVLAVF) traverse the membrane as a helical segment. The Cytoplasmic segment spans residues 216–226 (EEARVNEQLYM). Residues 227–247 (MIFGEALLNDGISVVLYNILI) traverse the membrane as a helical segment. At 248-270 (AFTKMHKFEDIEAVDILAGCARF) the chain is on the extracellular side. Residues 271–291 (VIVGCGGVFFGIIFGFISAFI) form a helical membrane-spanning segment. Topologically, residues 292–304 (TRFTQNISAIEPL) are cytoplasmic. A helical membrane pass occupies residues 305-325 (IVFMFSYLSYLAAETLYLSGI). Over 326–352 (LAITACAVTMKKYVEENVSQTSYTTIK) the chain is Extracellular. N-linked (GlcNAc...) asparagine glycosylation is present at Asn342. Residues 353–373 (YFMKMLSSVSETLIFIFMGVS) form a helical membrane-spanning segment. Residues 374-384 (TIGKNHEWNWA) are Cytoplasmic-facing. The chain crosses the membrane as a helical span at residues 385-405 (FICFTLLFCQIWRAISVFTLF). Over 406-420 (YVSNQFRTFPFSIKD) the chain is Extracellular. An intramembrane region (name=L) is located at residues 421–441 (QFIIFYSGVRGAGSFSLAFLL). At 442–450 (PLSLFPRKK) the chain is on the extracellular side. The chain crosses the membrane as a helical span at residues 451–471 (LFVTATLVVTYFTVFFQGITI). Over 472 to 797 (GPLVRYLDVR…KSHSPLLHRK (326 aa)) the chain is Cytoplasmic. Residues 759–769 (YDSGEQTEEET) show a composition bias toward acidic residues. The disordered stretch occupies residues 759–797 (YDSGEQTEEETSAILSRWTAEHRHSTEHHKSHSPLLHRK). The segment covering 783 to 797 (STEHHKSHSPLLHRK) has biased composition (basic residues).

Belongs to the monovalent cation:proton antiporter 1 (CPA1) transporter (TC 2.A.36) family. Homodimer; each protomer has one site for sodium and one site for proton binding. Interacts with CHP1 and CHP2. Post-translationally, may be phosphorylated. As to expression, expressed in kidney. Expressed in uterus and endometrial epithelial cells. Expressed in the inner segments of inner medullary collecting ducts (IMCD) in kidney. Expressed in AGTR1-positive neurons in organum vasculosum of the lamina terminalis (at protein level).

It localises to the basolateral cell membrane. The protein localises to the apical cell membrane. Its subcellular location is the zymogen granule membrane. It carries out the reaction Na(+)(in) + H(+)(out) = Na(+)(out) + H(+)(in). The catalysed reaction is Na(+)(out) + NH4(+)(in) = Na(+)(in) + NH4(+)(out). With respect to regulation, up-regulated in response to high extracellular sodium concentration. In terms of biological role, electroneutral antiporter that exchanges sodium for protons or ammonium ions at the basolateral membrane of epithelia to regulate cell volume and intracellular pH upon hypertonic conditions. As part of transcellular ammonia transport in renal tubules, mediates basolateral ammonium extrusion in the medullary thick ascending limb, regulating the corticopapillary ammonium gradient and overall renal acid excretion. Mediates sodium:proton exchange in gastric parietal cells secondary to cAMP-dependent acid secretion and hyperosmolarity. Possibly coupled to chloride:bicarbonate antiporter, enables loading of parietal cells with sodium and chloride ions to maintain cell volume and normal gastric acid secretion. Functions as a sodium sensor in neurons of organum vasculosum of the lamina terminalis where it regulates water intake in response to increased sodium concentration in body fluids. The protein is Sodium/hydrogen exchanger 4 (Slc9a4) of Mus musculus (Mouse).